We begin with the raw amino-acid sequence, 329 residues long: DNA-directed RNA polymerase subunit alpha (329 aa).

The alpha N-terminal domain (alpha-NTD) stretch occupies residues 1–232; it reads MQEMLEQLLT…YQLIAFVDLK (232 aa). The interval 246-329 is alpha C-terminal domain (alpha-CTD); the sequence is FDPIFLQPVD…PSSLVSKESA (84 aa).

This sequence belongs to the RNA polymerase alpha chain family. Homodimer. The RNAP catalytic core consists of 2 alpha, 1 beta, 1 beta' and 1 omega subunit. When a sigma factor is associated with the core the holoenzyme is formed, which can initiate transcription.

The catalysed reaction is RNA(n) + a ribonucleoside 5'-triphosphate = RNA(n+1) + diphosphate. DNA-dependent RNA polymerase catalyzes the transcription of DNA into RNA using the four ribonucleoside triphosphates as substrates. The sequence is that of DNA-directed RNA polymerase subunit alpha from Hydrogenovibrio crunogenus (strain DSM 25203 / XCL-2) (Thiomicrospira crunogena).